A 1461-amino-acid chain; its full sequence is MGAVGIPLTAHCVVLFLLQMVALSSEQFTVNGLESPVLVPLDGNLELSCQLSPPQQAKHMEIRWFKNRYSEPVYLYRNGKDLFGEIVYKYVERTELLKDDIGKGKVTLRIFKVTSVDSGSYHCFFKDGKFYEEHIIDVKVTATSSDIQILMHPPNIKGVRLECHSGGWFPQPHMEWRDSKGEYIPATSKSHSQDENEFFNMTMDLFIKSNSHWSATCYIQNFVTHQEESISIVLPGVWDSWCPAWIMITLLIVIHMTYYIKLYRTYATKEMLLKSIQSSSQSSTVDTEKKEWLLKSIQSRIQSSSVDAEKKEWLLKFIQSSIQSSSVDLEKKEWLLKSIQSSIQSAIVDRGTKEWLLESIQSSILSSIVDQGTKVLLLKSIQSSIQSSTLDIETKELLLKSIQSSIQSSIMDLGTKELLLKIIQSSIQSSSVDLGTKELLLKIIQSSIQSSTVDLGTKELLLKIIQSSIQSSSVDLGTKELLLKIIQSSIQSSTVDLGTKELLLKIIQSSIQSSSVDLGAKMGLLESILSSIQSSNVDLETKVLLLKSIQSSIQSSTVYLGIKQWLLERIESIIQSSSVYLDTKELLLKIIQSSIESYSVDLGNKEFLLKIILSSIQSSSVDLGTKELLVKFFQSNIQSSSVIPGTKKLLVKIIQSSLQSSSVDLGTKKVLLDIIQTSIQNSNVHTERKGLLLKIIQSSVQSSSVDQGTKEMLLEIIQSSIQNSSVNQWTKDLLLKIIQSIIQSSSVDLGTKGFLLKIIQSSIQSSSVDIGTKSMLLKKTGLILKSSIVNPGTELLFQLIESIRHSSSVNSETKKMLSEITQSTVQSSSVNPVTEEMIEEKYQLLLQSSSVNLEAENILNVTTQWILQISSVNQGKEMLLLDKIQQILQISSVNPETKDLLLEKIELILQNPGVHQETKDLLLERIQLILQNSSVQKETKYLLLERIRSILQSSCVQKETKDLLLERIQSLLQSSCVQKETKDLLLEKIQLILQNSTVHQETKDLLLERIQLFLQNSTVDQETSYLLLKRIQLILQSSSVKKETKEFVLYIIESILHSSSVHQETKDLLFDRVQLILESSSVQQGLKCLLLNMIQVIFQRTSVQKEMKDLLFNRIPLILESSSVQQETKDKLLDIIQSILQRTSVQEETKDKLLDIIQSILQRSSVQKDTIDTLLDRIQLILQRTSVQKEMKDFLLDRIKSILESFSVHQETKKLLLNRIMSILESSTVHQETKKLLLERIQSILESSSVQQETKKLLLDRIHSILKSSSVQKETKNLLLDRIHSILKSSSVQKESCNKRNPFWKKYALDLGISVFTIIVVTLIMHLKQREADQHFELNTLWSKDTSVILCVLIMFNNRLKALIYFRLYGFSPPGKAHKYIVNYILRFSHPVFCIVYSATILYMYLQIQNKDSLFSLYNSWMVEMEMVLIFLLVIFNVKNIATVLLYFDSTTLRLFFWIKG.

The signal sequence occupies residues 1–24 (MGAVGIPLTAHCVVLFLLQMVALS). Residues 25 to 1306 (SEQFTVNGLE…CNKRNPFWKK (1282 aa)) are Extracellular-facing. Positions 26 to 139 (EQFTVNGLES…FYEEHIIDVK (114 aa)) constitute an Ig-like V-type domain. Cystine bridges form between C49–C123 and C163–C217. The region spanning 142–231 (ATSSDIQILM…FVTHQEESIS (90 aa)) is the Ig-like C1-type domain. N200 carries N-linked (GlcNAc...) asparagine glycosylation. The chain crosses the membrane as a helical span at residues 1307 to 1327 (YALDLGISVFTIIVVTLIMHL). Topologically, residues 1328–1345 (KQREADQHFELNTLWSKD) are cytoplasmic. A helical transmembrane segment spans residues 1346-1366 (TSVILCVLIMFNNRLKALIYF). Over 1367-1387 (RLYGFSPPGKAHKYIVNYILR) the chain is Extracellular. Residues 1388 to 1408 (FSHPVFCIVYSATILYMYLQI) traverse the membrane as a helical segment. The Cytoplasmic portion of the chain corresponds to 1409-1427 (QNKDSLFSLYNSWMVEMEM). Residues 1428 to 1448 (VLIFLLVIFNVKNIATVLLYF) form a helical membrane-spanning segment. Over 1449–1461 (DSTTLRLFFWIKG) the chain is Extracellular.

It belongs to the SKINT family. As to expression, expressed in skin and, to a lower extent, testis.

It localises to the membrane. In terms of biological role, may act by engaging a cell surface molecule on immature T-cells in the embryonic thymus. The chain is Selection and upkeep of intraepithelial T-cells protein 5 (Skint5) from Mus musculus (Mouse).